The primary structure comprises 1781 residues: BCL-6 corepressor-like protein 1 (1781 aa).

Disordered regions lie at residues 64-136 (AVGS…SHSR) and 337-362 (ASTPPAAPAPPSVPMPTPTPSSGPPS). Composition is skewed to polar residues over residues 66-82 (GSGSNARGTNPDGNTTE) and 127-136 (PDSTEASHSR). Position 490 is a phosphoserine (Ser490). A compositionally biased stretch (low complexity) spans 521 to 531 (SCTSPSSSTNS). Disordered stretches follow at residues 521–545 (SCTSPSSSTNSQPAPDGVPGPLADT), 561–616 (LLPA…EMPL), 733–777 (NRDP…STVK), 869–895 (PLGSSETVHGLPEGQPRPGGPFAPEQD), and 933–960 (QPSSGDMGVNQGSEESESHLCSDSTPKM). A compositionally biased stretch (polar residues) spans 581-594 (TDQQTEGTSVTFSP). Phosphoserine is present on residues Ser593 and Ser607. Lys741 participates in a covalent cross-link: Glycyl lysine isopeptide (Lys-Gly) (interchain with G-Cter in SUMO2). Ser1024 is subject to Phosphoserine. A Glycyl lysine isopeptide (Lys-Gly) (interchain with G-Cter in SUMO2) cross-link involves residue Lys1087. The interval 1100-1484 (WQPDEETESL…PTARQIPPEA (385 aa)) is disordered. Positions 1116–1127 (CNKEKEIEEEPR) are enriched in basic and acidic residues. Residue Ser1162 is modified to Phosphoserine. Residues 1176–1185 (VRGKHKHRKP) are compositionally biased toward basic residues. Basic and acidic residues predominate over residues 1195-1213 (KRTDGHEEGSLEKKAKNSF). Polar residues predominate over residues 1222–1234 (STRTRSQSGSICS). 2 stretches are compositionally biased toward basic and acidic residues: residues 1271 to 1284 (TQRDTQYRSHHAQD) and 1297 to 1307 (RAREMPWRTEA). Residues 1314-1324 (TNEEEEDDEEE) are compositionally biased toward acidic residues. A compositionally biased stretch (basic residues) spans 1328–1339 (KRKKRRRQKSRK). Basic and acidic residues predominate over residues 1350–1362 (EEQRRKGRADSKA). 2 stretches are compositionally biased toward polar residues: residues 1381 to 1394 (LLLSSKAQGISDSP) and 1437 to 1449 (RWSQQKTRSSKSP). 3 ANK repeats span residues 1493-1523 (AGETLLQRAARLGYKDVVLYCLQKHSEDVNH), 1527-1556 (AGYTALHEACSRGWTDILNILLQHGANVNC), and 1560-1589 (DGTRPVHDAVVNDNLETIWLLLSYGADPTL). Residues 1664 to 1781 (DDFMFELSDK…SEVEYQSWSS (118 aa)) form a PCGF Ub-like fold domain (PUFD); required for the interaction with the KDM2B-SKP1 heterodimeric complex region.

Belongs to the BCOR family. In terms of assembly, interacts with PCGF1, forming heterodimers. The PCGF1-BCORL1 heterodimeric complex interacts with the KDM2B-SKP1 heterodimeric complex to form a homotetrameric polycomb repression complex 1 (PRC1.1). Interacts with SKP1. Interacts with CTBP1, HDAC4, HDAC5 and HDAC7. Highly expressed in lung and testis.

It is found in the nucleus. Transcriptional corepressor. May specifically inhibit gene expression when recruited to promoter regions by sequence specific DNA-binding proteins such as BCL6. This repression may be mediated at least in part by histone deacetylase activities which can associate with this corepressor. The chain is BCL-6 corepressor-like protein 1 (Bcorl1) from Mus musculus (Mouse).